A 276-amino-acid polypeptide reads, in one-letter code: NADPH-dependent 7-cyano-7-deazaguanine reductase (276 aa).

83–85 lines the substrate pocket; that stretch reads IES. 85 to 86 serves as a coordination point for NADPH; that stretch reads SK. Cys-184 acts as the Thioimide intermediate in catalysis. Catalysis depends on Asp-191, which acts as the Proton donor. A substrate-binding site is contributed by 223-224; sequence HE. 252-253 provides a ligand contact to NADPH; sequence RG.

Belongs to the GTP cyclohydrolase I family. QueF type 2 subfamily. Homodimer.

It is found in the cytoplasm. The enzyme catalyses 7-aminomethyl-7-carbaguanine + 2 NADP(+) = 7-cyano-7-deazaguanine + 2 NADPH + 3 H(+). Its pathway is tRNA modification; tRNA-queuosine biosynthesis. In terms of biological role, catalyzes the NADPH-dependent reduction of 7-cyano-7-deazaguanine (preQ0) to 7-aminomethyl-7-deazaguanine (preQ1). This Pseudomonas syringae pv. tomato (strain ATCC BAA-871 / DC3000) protein is NADPH-dependent 7-cyano-7-deazaguanine reductase.